A 496-amino-acid polypeptide reads, in one-letter code: Cruciferin BnC2 (496 aa).

Positions 1-23 (MARLSSLLYFSITVLIFLHGSTA) are cleaved as a signal peptide. Intrachain disulfides connect cysteine 30/cysteine 63 and cysteine 106/cysteine 313. Cupin type-1 domains lie at 35-269 (LNAL…RTAQ) and 319-468 (DNLD…EEAR). Threonine 109 is modified (phosphothreonine). The disordered stretch occupies residues 114 to 170 (SVFQPGSGSPFGEGQGQGQQGQGQGQGQGQGKGQQGQGKGQQGQSQGQQGQGQGFRD). The segment covering 122–154 (SPFGEGQGQGQQGQGQGQGQGQGKGQQGQGKGQ) has biased composition (gly residues). Tyrosine 336 is modified (phosphotyrosine). Serine 338 carries the post-translational modification Phosphoserine. Residue threonine 432 is modified to Phosphothreonine.

The protein belongs to the 11S seed storage protein (globulins) family. Hexamer; each subunit is composed of an acidic and a basic chain derived from a single precursor and linked by a disulfide bond.

Its function is as follows. This is a seed storage protein. This is Cruciferin BnC2 (BnC2) from Brassica napus (Rape).